Consider the following 110-residue polypeptide: Large ribosomal subunit protein uL22 (110 aa).

The protein belongs to the universal ribosomal protein uL22 family. Part of the 50S ribosomal subunit.

Its function is as follows. This protein binds specifically to 23S rRNA; its binding is stimulated by other ribosomal proteins, e.g. L4, L17, and L20. It is important during the early stages of 50S assembly. It makes multiple contacts with different domains of the 23S rRNA in the assembled 50S subunit and ribosome. Functionally, the globular domain of the protein is located near the polypeptide exit tunnel on the outside of the subunit, while an extended beta-hairpin is found that lines the wall of the exit tunnel in the center of the 70S ribosome. The protein is Large ribosomal subunit protein uL22 of Exiguobacterium sp. (strain ATCC BAA-1283 / AT1b).